Reading from the N-terminus, the 22-residue chain is Heat shock 70-related protein 1, mitochondrial (22 aa).

The protein belongs to the heat shock protein 70 family.

It localises to the mitochondrion. This Leishmania tarentolae (Sauroleishmania tarentolae) protein is Heat shock 70-related protein 1, mitochondrial.